The chain runs to 392 residues: tRNA (guanine(26)-N(2)/guanine(27)-N(2))-dimethyltransferase (392 aa).

One can recognise a Trm1 methyltransferase domain in the interval 2–375; it reads EIVQEGIAKI…LSFEEVMKKM (374 aa). S-adenosyl-L-methionine is bound by residues Arg36, Arg66, Asp84, Glu113, and Ala114. Cys247, Cys250, Cys266, and Cys269 together coordinate Zn(2+).

It belongs to the class I-like SAM-binding methyltransferase superfamily. Trm1 family.

The enzyme catalyses guanosine(26)/guanosine(27) in tRNA + 4 S-adenosyl-L-methionine = N(2)-dimethylguanosine(26)/N(2)-dimethylguanosine(27) in tRNA + 4 S-adenosyl-L-homocysteine + 4 H(+). Dimethylates the guanine residues at position 26 and 27 of one or more tRNAs using S-adenosyl-L-methionine as donor of the methyl groups. This Aquifex aeolicus (strain VF5) protein is tRNA (guanine(26)-N(2)/guanine(27)-N(2))-dimethyltransferase.